The sequence spans 224 residues: 7-cyano-7-deazaguanine synthase (224 aa).

An ATP-binding site is contributed by 11 to 21 (FSGGQDSTTCL). Zn(2+) contacts are provided by Cys190, Cys199, Cys202, and Cys205.

Belongs to the QueC family. Zn(2+) serves as cofactor.

It carries out the reaction 7-carboxy-7-deazaguanine + NH4(+) + ATP = 7-cyano-7-deazaguanine + ADP + phosphate + H2O + H(+). The protein operates within purine metabolism; 7-cyano-7-deazaguanine biosynthesis. Functionally, catalyzes the ATP-dependent conversion of 7-carboxy-7-deazaguanine (CDG) to 7-cyano-7-deazaguanine (preQ(0)). The polypeptide is 7-cyano-7-deazaguanine synthase (Parabacteroides distasonis (strain ATCC 8503 / DSM 20701 / CIP 104284 / JCM 5825 / NCTC 11152)).